Here is a 429-residue protein sequence, read N- to C-terminus: Enolase 2 (429 aa).

Q163 contacts (2R)-2-phosphoglycerate. Residue E205 is the Proton donor of the active site. Mg(2+)-binding residues include D242, E286, and D313. K338, R367, S368, and K389 together coordinate (2R)-2-phosphoglycerate. Catalysis depends on K338, which acts as the Proton acceptor.

Belongs to the enolase family. It depends on Mg(2+) as a cofactor.

It is found in the cytoplasm. The protein localises to the secreted. Its subcellular location is the cell surface. The enzyme catalyses (2R)-2-phosphoglycerate = phosphoenolpyruvate + H2O. The protein operates within carbohydrate degradation; glycolysis; pyruvate from D-glyceraldehyde 3-phosphate: step 4/5. In terms of biological role, catalyzes the reversible conversion of 2-phosphoglycerate (2-PG) into phosphoenolpyruvate (PEP). It is essential for the degradation of carbohydrates via glycolysis. The sequence is that of Enolase 2 from Lactiplantibacillus plantarum (strain ATCC BAA-793 / NCIMB 8826 / WCFS1) (Lactobacillus plantarum).